The primary structure comprises 199 residues: Segregation and condensation protein B (199 aa).

Belongs to the ScpB family. As to quaternary structure, homodimer. Homodimerization may be required to stabilize the binding of ScpA to the Smc head domains. Component of a cohesin-like complex composed of ScpA, ScpB and the Smc homodimer, in which ScpA and ScpB bind to the head domain of Smc. The presence of the three proteins is required for the association of the complex with DNA.

It is found in the cytoplasm. Participates in chromosomal partition during cell division. May act via the formation of a condensin-like complex containing Smc and ScpA that pull DNA away from mid-cell into both cell halves. In Leuconostoc mesenteroides subsp. mesenteroides (strain ATCC 8293 / DSM 20343 / BCRC 11652 / CCM 1803 / JCM 6124 / NCDO 523 / NBRC 100496 / NCIMB 8023 / NCTC 12954 / NRRL B-1118 / 37Y), this protein is Segregation and condensation protein B.